A 123-amino-acid polypeptide reads, in one-letter code: Large ribosomal subunit protein bL12 (123 aa).

It belongs to the bacterial ribosomal protein bL12 family. In terms of assembly, homodimer. Part of the ribosomal stalk of the 50S ribosomal subunit. Forms a multimeric L10(L12)X complex, where L10 forms an elongated spine to which 2 to 4 L12 dimers bind in a sequential fashion. Binds GTP-bound translation factors.

Functionally, forms part of the ribosomal stalk which helps the ribosome interact with GTP-bound translation factors. Is thus essential for accurate translation. This Rickettsia bellii (strain OSU 85-389) protein is Large ribosomal subunit protein bL12.